The sequence spans 150 residues: 6,7-dimethyl-8-ribityllumazine synthase (150 aa).

Residues Phe-11, 42-44 (IFE), and 73-75 (CAI) contribute to the 5-amino-6-(D-ribitylamino)uracil site. 78–79 (ES) serves as a coordination point for (2S)-2-hydroxy-3-oxobutyl phosphate. His-81 serves as the catalytic Proton donor. Asn-106 serves as a coordination point for 5-amino-6-(D-ribitylamino)uracil. Arg-120 contributes to the (2S)-2-hydroxy-3-oxobutyl phosphate binding site.

The protein belongs to the DMRL synthase family.

It carries out the reaction (2S)-2-hydroxy-3-oxobutyl phosphate + 5-amino-6-(D-ribitylamino)uracil = 6,7-dimethyl-8-(1-D-ribityl)lumazine + phosphate + 2 H2O + H(+). It functions in the pathway cofactor biosynthesis; riboflavin biosynthesis; riboflavin from 2-hydroxy-3-oxobutyl phosphate and 5-amino-6-(D-ribitylamino)uracil: step 1/2. Its function is as follows. Catalyzes the formation of 6,7-dimethyl-8-ribityllumazine by condensation of 5-amino-6-(D-ribitylamino)uracil with 3,4-dihydroxy-2-butanone 4-phosphate. This is the penultimate step in the biosynthesis of riboflavin. The protein is 6,7-dimethyl-8-ribityllumazine synthase of Paramagnetospirillum magneticum (strain ATCC 700264 / AMB-1) (Magnetospirillum magneticum).